Here is an 820-residue protein sequence, read N- to C-terminus: G-type lectin S-receptor-like serine/threonine-protein kinase At1g11300 (820 aa).

The N-terminal stretch at 1 to 26 is a signal peptide; it reads MRLHESSSPFVCILVLSCFFLSVSLA. Positions 27–150 constitute a Bulb-type lectin domain; it reads QERAFFSGKL…SSDAYLWESF (124 aa). Residues 27-436 lie on the Extracellular side of the membrane; the sequence is QERAFFSGKL…SEIKTKDKRP (410 aa). N37, N58, N87, N115, N123, N173, N211, N247, N256, and N282 each carry an N-linked (GlcNAc...) asparagine glycan. An EGF-like; atypical domain is found at 290 to 326; the sequence is PATECDNYRRCGEFATCNPRKNPLCSCIRGFRPRNLI. 2 cysteine pairs are disulfide-bonded: C294-C306 and C300-C314. N-linked (GlcNAc...) asparagine glycans are attached at residues N332 and N351. The PAN domain maps to 345-425; the sequence is CERQNNNGSA…SGLDLYIRLA (81 aa). 2 disulfide bridges follow: C379-C400 and C383-C389. The N-linked (GlcNAc...) asparagine glycan is linked to N404. Residues 437–457 traverse the membrane as a helical segment; sequence ILIGTILAGGIFVVAACVLLA. Residues 458–820 lie on the Cytoplasmic side of the membrane; sequence RRIVMKKRAK…NVTITDVTGR (363 aa). A Protein kinase domain is found at 509–788; sequence FSLRNKLGQG…DIPEPKQPAF (280 aa). ATP-binding positions include 515 to 523 and K537; that span reads LGQGGFGPV. The segment at 598 to 615 is caM-binding; that stretch reads RRAKLLDWKTRFNIINGI. The active-site Proton acceptor is the D634.

Belongs to the protein kinase superfamily. Ser/Thr protein kinase family.

The protein localises to the cell membrane. It carries out the reaction L-seryl-[protein] + ATP = O-phospho-L-seryl-[protein] + ADP + H(+). The catalysed reaction is L-threonyl-[protein] + ATP = O-phospho-L-threonyl-[protein] + ADP + H(+). The sequence is that of G-type lectin S-receptor-like serine/threonine-protein kinase At1g11300 from Arabidopsis thaliana (Mouse-ear cress).